The sequence spans 286 residues: Large ribosomal subunit protein uL4m (286 aa).

Residues 1–26 (MTIKRNLVKTLQSIRYQATTATAHAE) constitute a mitochondrion transit peptide. The tract at residues 85 to 132 (RRVGASNPPGRSENGFSRRKLMPQKGSGRARVGDANSPTRHNGGRALA) is disordered.

This sequence belongs to the universal ribosomal protein uL4 family. As to quaternary structure, component of the mitochondrial large ribosomal subunit (mt-LSU). Mature yeast 74S mitochondrial ribosomes consist of a small (37S) and a large (54S) subunit. The 37S small subunit contains a 15S ribosomal RNA (15S mt-rRNA) and 34 different proteins. The 54S large subunit contains a 21S rRNA (21S mt-rRNA) and 46 different proteins.

The protein resides in the mitochondrion. Functionally, component of the mitochondrial ribosome (mitoribosome), a dedicated translation machinery responsible for the synthesis of mitochondrial genome-encoded proteins, including at least some of the essential transmembrane subunits of the mitochondrial respiratory chain. The mitoribosomes are attached to the mitochondrial inner membrane and translation products are cotranslationally integrated into the membrane. This Saccharomyces cerevisiae (strain ATCC 204508 / S288c) (Baker's yeast) protein is Large ribosomal subunit protein uL4m (YML6).